Here is a 313-residue protein sequence, read N- to C-terminus: Porphobilinogen deaminase (313 aa).

Position 242 is an S-(dipyrrolylmethanemethyl)cysteine (C242).

It belongs to the HMBS family. Monomer. Requires dipyrromethane as cofactor.

The enzyme catalyses 4 porphobilinogen + H2O = hydroxymethylbilane + 4 NH4(+). The protein operates within porphyrin-containing compound metabolism; protoporphyrin-IX biosynthesis; coproporphyrinogen-III from 5-aminolevulinate: step 2/4. Tetrapolymerization of the monopyrrole PBG into the hydroxymethylbilane pre-uroporphyrinogen in several discrete steps. This Shigella flexneri protein is Porphobilinogen deaminase.